A 205-amino-acid polypeptide reads, in one-letter code: Small ribosomal subunit protein uS4 (205 aa).

The interval 18–46 is disordered; that stretch reads NIWGRPKSPVNRREYGPGQHGQRRKGKLS. Residues 94–154 form the S4 RNA-binding domain; sequence RRLDTVVFRA…EASKQLAVVL (61 aa).

It belongs to the universal ribosomal protein uS4 family. Part of the 30S ribosomal subunit. Contacts protein S5. The interaction surface between S4 and S5 is involved in control of translational fidelity.

One of the primary rRNA binding proteins, it binds directly to 16S rRNA where it nucleates assembly of the body of the 30S subunit. Its function is as follows. With S5 and S12 plays an important role in translational accuracy. In Bradyrhizobium sp. (strain ORS 278), this protein is Small ribosomal subunit protein uS4.